We begin with the raw amino-acid sequence, 675 residues long: Protein REPRESSOR OF VERNALIZATION 1 (675 aa).

A disordered region spans residues 1 to 143; sequence MGRRRRFTQQ…DPVKVTGKGK (143 aa). Positions 22–31 are enriched in low complexity; it reads AEPPKTAKPA. Acidic residues predominate over residues 48–70; the sequence is EEEDEDEEDELELEDEEDDEKDL. Positions 71 to 86 are enriched in basic and acidic residues; sequence EEMRRNEEEERREETR. Residues 73–80 carry the Nuclear localization signal motif; that stretch reads MRRNEEEE. Over residues 87 to 96 the composition is skewed to basic residues; the sequence is TRRRRGRKPK. Positions 113–127 are enriched in acidic residues; it reads SDEEEEEEVREEDST. A BAH domain is found at 157–275; it reads NTFELEDPVL…TVAKKLWNLT (119 aa). Disordered stretches follow at residues 300–349, 493–512, and 587–675; these read ELPD…KPET, GLTP…LQMT, and LASP…ADHE. Composition is skewed to basic and acidic residues over residues 333-346, 499-512, and 613-627; these read VSRD…HFVK, KTSE…LQMT, and KLEK…KPEE. The 147-residue stretch at 372 to 518 folds into the TFIIS central domain; sequence YRDKWLDKLL…LQMTDARCER (147 aa).

As to expression, expressed constitutively.

Its subcellular location is the nucleus. In terms of biological role, component of a grass-specific mechanism of vernalization, a process by which prolonged cold exposure provides competence to flower in daylengths longer than 12 hours. Negative regulator of flowering required for vernalization establishment by repressing VRN1 before vernalization and in the fall season. The chain is Protein REPRESSOR OF VERNALIZATION 1 from Brachypodium distachyon (Purple false brome).